A 662-amino-acid chain; its full sequence is Probable quinol oxidase subunit 1 (662 aa).

The next 2 helical transmembrane spans lie at 14-34 (WMITMAQIGAPFLVIGLIAVI) and 58-78 (LMYLICAVLMFVRGGIDALLL). H102 is a binding site for Fe(II)-heme a. Transmembrane regions (helical) follow at residues 103–123 (GVIMIIFMAMPFVFGLWNVVV), 140–160 (ISFWLFFVGMILFNLSFIIGG), 187–207 (VAIQISGIGTLMTGINFFVTI), 228–248 (FITTLIVILAFPVFTVVLALM), 273–293 (FFWVWGHPEVYIVILPAFGIY), 311–331 (MVWATAGIAFLSFLVWVHHFF), 336–356 (GALINSFFSISTMLIGVPTGV), and 376–396 (MLFSLAFIPNFLLGGVTGVML). 4 residues coordinate Cu cation: H279, Y283, H328, and H329. A cross-link (1'-histidyl-3'-tyrosine (His-Tyr)) is located at residues 279-283 (HPEVY). Residue H414 participates in heme a3 binding. The next 5 membrane-spanning stretches (helical) occupy residues 415 to 435 (FHYTLVTGVVFACLAGLIFWY), 451 to 471 (CFWLFMIGFNVCFLPQFILGL), 492 to 512 (VISTIGALLMAVGFLFLVVSI), 586 to 605 (THTGVIMGIFMLLGGFFLIF), and 609 to 628 (IPAAICLVGILGSLVYQSFV). H416 is a binding site for Fe(II)-heme a.

This sequence belongs to the heme-copper respiratory oxidase family. It depends on Cu cation as a cofactor. The cofactor is ferriheme a. Heme A3. is required as a cofactor.

The protein localises to the cell membrane. It catalyses the reaction 2 a quinol + O2 = 2 a quinone + 2 H2O. It participates in energy metabolism; oxidative phosphorylation. Its function is as follows. Catalyzes quinol oxidation with the concomitant reduction of oxygen to water. This chain is Probable quinol oxidase subunit 1 (qoxB), found in Staphylococcus haemolyticus (strain JCSC1435).